A 135-amino-acid polypeptide reads, in one-letter code: Bacilliredoxin CHU_0972 (135 aa).

This sequence belongs to the bacilliredoxin family.

The chain is Bacilliredoxin CHU_0972 from Cytophaga hutchinsonii (strain ATCC 33406 / DSM 1761 / CIP 103989 / NBRC 15051 / NCIMB 9469 / D465).